The sequence spans 509 residues: 2,3-bisphosphoglycerate-independent phosphoglycerate mutase (509 aa).

Mn(2+)-binding residues include D12 and S62. S62 (phosphoserine intermediate) is an active-site residue. Residues H123, 153–154 (RD), R185, R191, 260–263 (RPDR), and K333 contribute to the substrate site. Mn(2+)-binding residues include D400, H404, D441, H442, and H460.

This sequence belongs to the BPG-independent phosphoglycerate mutase family. Monomer. The cofactor is Mn(2+).

The enzyme catalyses (2R)-2-phosphoglycerate = (2R)-3-phosphoglycerate. Its pathway is carbohydrate degradation; glycolysis; pyruvate from D-glyceraldehyde 3-phosphate: step 3/5. In terms of biological role, catalyzes the interconversion of 2-phosphoglycerate and 3-phosphoglycerate. The chain is 2,3-bisphosphoglycerate-independent phosphoglycerate mutase from Clostridium kluyveri (strain ATCC 8527 / DSM 555 / NBRC 12016 / NCIMB 10680 / K1).